The chain runs to 431 residues: Glucose-1-phosphate adenylyltransferase (431 aa).

Lys-39 is a binding site for beta-D-fructose 1,6-bisphosphate. Arg-40, His-46, and Arg-52 together coordinate AMP. Alpha-D-glucose 1-phosphate is bound at residue Tyr-114. Position 130 (Arg-130) interacts with AMP. Alpha-D-glucose 1-phosphate contacts are provided by residues Gly-179, 194–195 (EK), and Ser-212. Arg-386 is a binding site for AMP. Position 429–431 (429–431 (QER)) interacts with beta-D-fructose 1,6-bisphosphate.

The protein belongs to the bacterial/plant glucose-1-phosphate adenylyltransferase family. In terms of assembly, homotetramer.

It carries out the reaction alpha-D-glucose 1-phosphate + ATP + H(+) = ADP-alpha-D-glucose + diphosphate. Its pathway is glycan biosynthesis; glycogen biosynthesis. Its activity is regulated as follows. Allosterically activated by fructose-1,6-bisphosphate (F16BP) and inhibited by AMP. Its function is as follows. Involved in the biosynthesis of ADP-glucose, a building block required for the elongation reactions to produce glycogen. Catalyzes the reaction between ATP and alpha-D-glucose 1-phosphate (G1P) to produce pyrophosphate and ADP-Glc. In Klebsiella pneumoniae subsp. pneumoniae (strain ATCC 700721 / MGH 78578), this protein is Glucose-1-phosphate adenylyltransferase.